The sequence spans 393 residues: Small RNA 2'-O-methyltransferase (393 aa).

Positions 36, 55, 78, 83, 115, and 131 each coordinate S-adenosyl-L-methionine. Positions 132, 135, 136, and 181 each coordinate Mg(2+). The tract at residues 286–307 (HLPRRKEQAGERGDKPKDIGGS) is disordered. Residues 290–305 (RKEQAGERGDKPKDIG) show a composition bias toward basic and acidic residues.

This sequence belongs to the methyltransferase superfamily. HEN1 family. Mg(2+) is required as a cofactor.

It localises to the cytoplasm. It catalyses the reaction small RNA 3'-end nucleotide + S-adenosyl-L-methionine = small RNA 3'-end 2'-O-methylnucleotide + S-adenosyl-L-homocysteine + H(+). Its function is as follows. Methyltransferase that adds a 2'-O-methyl group at the 3'-end of piRNAs, a class of 24 to 30 nucleotide RNAs that are generated by a Dicer-independent mechanism and are primarily derived from transposons and other repeated sequence elements. This probably protects the 3'-end of piRNAs from uridylation activity and subsequent degradation. Stabilization of piRNAs is essential for gametogenesis. The chain is Small RNA 2'-O-methyltransferase (HENMT1) from Homo sapiens (Human).